The following is a 164-amino-acid chain: Diphosphoinositol polyphosphate phosphohydrolase 3-alpha (164 aa).

Residues arginine 9, 17–19 (KKR), and 38–40 (SSR) contribute to the substrate site. A Nudix hydrolase domain is found at 17–144 (KKRAACLCFR…VHAEYLEKLK (128 aa)). Mg(2+) is bound by residues glycine 49 and glutamate 65. Positions 50 to 71 (GGMEPEEEPGGAAVREVYEEAG) match the Nudix box motif. The Proton acceptor role is filled by glutamate 68. Mg(2+) is bound at residue glutamate 69. Substrate contacts are provided by residues 89 to 91 (PKH), arginine 115, and lysine 133. The tract at residues 144–164 (KLGGSPTNGNSMAPSSPDSDP) is disordered. Polar residues predominate over residues 148–164 (SPTNGNSMAPSSPDSDP).

Belongs to the Nudix hydrolase family. DIPP subfamily. Mg(2+) serves as cofactor. Requires Mn(2+) as cofactor. Mainly expressed in testis and, at lower level in brain. According to PubMed:12121577, it is widely expressed.

The protein resides in the cytoplasm. The enzyme catalyses diphospho-myo-inositol polyphosphate + H2O = myo-inositol polyphosphate + phosphate.. It carries out the reaction P(1),P(6)-bis(5'-adenosyl) hexaphosphate + H2O = adenosine 5'-pentaphosphate + AMP + 2 H(+). It catalyses the reaction P(1),P(5)-bis(5'-adenosyl) pentaphosphate + H2O = adenosine 5'-tetraphosphate + AMP + 2 H(+). Its function is as follows. Cleaves a beta-phosphate from the diphosphate groups in PP-InsP5 (diphosphoinositol pentakisphosphate), suggesting that it may play a role in signal transduction. Also able to catalyze the hydrolysis of dinucleoside oligophosphates, with Ap6A and Ap5A being the preferred substrates. The major reaction products are ADP and p4a from Ap6A and ADP and ATP from Ap5A. Also able to hydrolyze 5-phosphoribose 1-diphosphate. The protein is Diphosphoinositol polyphosphate phosphohydrolase 3-alpha (NUDT10) of Homo sapiens (Human).